The following is a 363-amino-acid chain: Osmoprotective compounds uptake ATP-binding protein GgtA (363 aa).

The region spanning 4–234 (VSFEQVTKQF…PANLFVAGFI (231 aa)) is the ABC transporter domain. 36-43 (GPSGCGKT) lines the ATP pocket.

This sequence belongs to the ABC transporter superfamily. The complex is composed of two ATP-binding proteins (GgtA), two transmembrane proteins (GgtC and GgtD) and a solute-binding protein (GgtB).

It is found in the cell membrane. Part of the ABC transporter complex GgtABCD involved in the uptake of the osmoprotective compounds glucosylglycerol (GG), sucrose and trehalose. Responsible for energy coupling to the transport system. The chain is Osmoprotective compounds uptake ATP-binding protein GgtA from Synechocystis sp. (strain ATCC 27184 / PCC 6803 / Kazusa).